The chain runs to 236 residues: Large ribosomal subunit protein uL3 (236 aa).

Disordered regions lie at residues 132 to 153 (SNRA…GMAQ) and 200 to 236 (KGGD…KKGG). A compositionally biased stretch (polar residues) spans 133 to 145 (NRASHGNSRSHNV). Gln-153 carries the post-translational modification N5-methylglutamine. Positions 206-216 (VSPSIRSARPT) are enriched in polar residues. A compositionally biased stretch (low complexity) spans 217-228 (NNGNVNAAAKGG).

The protein belongs to the universal ribosomal protein uL3 family. In terms of assembly, part of the 50S ribosomal subunit. Forms a cluster with proteins L14 and L19. Methylated by PrmB.

One of the primary rRNA binding proteins, it binds directly near the 3'-end of the 23S rRNA, where it nucleates assembly of the 50S subunit. The protein is Large ribosomal subunit protein uL3 of Nitrosospira multiformis (strain ATCC 25196 / NCIMB 11849 / C 71).